Reading from the N-terminus, the 511-residue chain is ATP synthase subunit alpha (511 aa).

169-176 provides a ligand contact to ATP; sequence GDRKTGKT.

It belongs to the ATPase alpha/beta chains family. F-type ATPases have 2 components, CF(1) - the catalytic core - and CF(0) - the membrane proton channel. CF(1) has five subunits: alpha(3), beta(3), gamma(1), delta(1), epsilon(1). CF(0) has three main subunits: a(1), b(2) and c(9-12). The alpha and beta chains form an alternating ring which encloses part of the gamma chain. CF(1) is attached to CF(0) by a central stalk formed by the gamma and epsilon chains, while a peripheral stalk is formed by the delta and b chains.

The protein resides in the cell membrane. It carries out the reaction ATP + H2O + 4 H(+)(in) = ADP + phosphate + 5 H(+)(out). In terms of biological role, produces ATP from ADP in the presence of a proton gradient across the membrane. The alpha chain is a regulatory subunit. In Latilactobacillus sakei subsp. sakei (strain 23K) (Lactobacillus sakei subsp. sakei), this protein is ATP synthase subunit alpha.